Reading from the N-terminus, the 146-residue chain is Large ribosomal subunit protein bL9 (146 aa).

Belongs to the bacterial ribosomal protein bL9 family.

Its function is as follows. Binds to the 23S rRNA. This chain is Large ribosomal subunit protein bL9, found in Flavobacterium johnsoniae (strain ATCC 17061 / DSM 2064 / JCM 8514 / BCRC 14874 / CCUG 350202 / NBRC 14942 / NCIMB 11054 / UW101) (Cytophaga johnsonae).